A 340-amino-acid polypeptide reads, in one-letter code: Tetraacyldisaccharide 4'-kinase (340 aa).

51 to 58 is an ATP binding site; that stretch reads HMGGAGKT.

Belongs to the LpxK family.

It catalyses the reaction a lipid A disaccharide + ATP = a lipid IVA + ADP + H(+). Its pathway is glycolipid biosynthesis; lipid IV(A) biosynthesis; lipid IV(A) from (3R)-3-hydroxytetradecanoyl-[acyl-carrier-protein] and UDP-N-acetyl-alpha-D-glucosamine: step 6/6. Functionally, transfers the gamma-phosphate of ATP to the 4'-position of a tetraacyldisaccharide 1-phosphate intermediate (termed DS-1-P) to form tetraacyldisaccharide 1,4'-bis-phosphate (lipid IVA). This is Tetraacyldisaccharide 4'-kinase from Rhodopseudomonas palustris (strain TIE-1).